A 475-amino-acid polypeptide reads, in one-letter code: Aspartyl/glutamyl-tRNA(Asn/Gln) amidotransferase subunit B (475 aa).

This sequence belongs to the GatB/GatE family. GatB subfamily. Heterotrimer of A, B and C subunits.

The catalysed reaction is L-glutamyl-tRNA(Gln) + L-glutamine + ATP + H2O = L-glutaminyl-tRNA(Gln) + L-glutamate + ADP + phosphate + H(+). It catalyses the reaction L-aspartyl-tRNA(Asn) + L-glutamine + ATP + H2O = L-asparaginyl-tRNA(Asn) + L-glutamate + ADP + phosphate + 2 H(+). Functionally, allows the formation of correctly charged Asn-tRNA(Asn) or Gln-tRNA(Gln) through the transamidation of misacylated Asp-tRNA(Asn) or Glu-tRNA(Gln) in organisms which lack either or both of asparaginyl-tRNA or glutaminyl-tRNA synthetases. The reaction takes place in the presence of glutamine and ATP through an activated phospho-Asp-tRNA(Asn) or phospho-Glu-tRNA(Gln). The polypeptide is Aspartyl/glutamyl-tRNA(Asn/Gln) amidotransferase subunit B (Agathobacter rectalis (strain ATCC 33656 / DSM 3377 / JCM 17463 / KCTC 5835 / VPI 0990) (Eubacterium rectale)).